A 246-amino-acid polypeptide reads, in one-letter code: MAGHSQFSNIKHRKGAQDAKRSQKFTKLIREITVAAKQGLTDPELNPRLRSAIFSARKENLPKDKIETAIKNAAGNVAGESYEEIQYEGCGPSGAALIVHALTNNRNRTASEIRYIFSRKGGNLGETGCVSYLFDHVGLIVYKAEGINFEDLFNYGIELEVLNVEENNKEELYVITCGVKDFGRVRDAFYTKFGEPELARLSWQPKDLIEVSDKELIDKLSILVEELEDNDDVQYVEGNFIFADKL.

Positions 1-22 (MAGHSQFSNIKHRKGAQDAKRS) are disordered.

Belongs to the TACO1 family.

Its subcellular location is the cytoplasm. This Wolbachia pipientis subsp. Culex pipiens (strain wPip) protein is Probable transcriptional regulatory protein WP1214.